Consider the following 218-residue polypeptide: Pyridoxine/pyridoxamine 5'-phosphate oxidase (218 aa).

Substrate-binding positions include 14–17 (RREY) and Lys-72. FMN-binding positions include 67 to 72 (RIVLLK), 82 to 83 (YT), Arg-88, Lys-89, and Gln-111. Residues Tyr-129, Arg-133, and Ser-137 each contribute to the substrate site. Residues 146–147 (QS) and Trp-191 each bind FMN. 197–199 (RLH) provides a ligand contact to substrate. FMN is bound at residue Arg-201.

Belongs to the pyridoxamine 5'-phosphate oxidase family. Homodimer. FMN serves as cofactor.

The enzyme catalyses pyridoxamine 5'-phosphate + O2 + H2O = pyridoxal 5'-phosphate + H2O2 + NH4(+). It carries out the reaction pyridoxine 5'-phosphate + O2 = pyridoxal 5'-phosphate + H2O2. It functions in the pathway cofactor metabolism; pyridoxal 5'-phosphate salvage; pyridoxal 5'-phosphate from pyridoxamine 5'-phosphate: step 1/1. Its pathway is cofactor metabolism; pyridoxal 5'-phosphate salvage; pyridoxal 5'-phosphate from pyridoxine 5'-phosphate: step 1/1. Catalyzes the oxidation of either pyridoxine 5'-phosphate (PNP) or pyridoxamine 5'-phosphate (PMP) into pyridoxal 5'-phosphate (PLP). The chain is Pyridoxine/pyridoxamine 5'-phosphate oxidase from Escherichia coli O7:K1 (strain IAI39 / ExPEC).